We begin with the raw amino-acid sequence, 106 residues long: UPF0145 protein PP_2873 (106 aa).

It belongs to the UPF0145 family.

In Pseudomonas putida (strain ATCC 47054 / DSM 6125 / CFBP 8728 / NCIMB 11950 / KT2440), this protein is UPF0145 protein PP_2873.